The sequence spans 257 residues: MASKIGSRRWMLQLIMQLGSVLLTRCPFWGCFSQLMLYAERAEARRKPDIPVPYLYFDMGAAVLCASFMSFGVKRRWFALGAALQLAISTYAAYIGGYVHYGDWLKVRMYSRTVAIIGGFLVLASGAGELYRRKPRSRSLQSTGQVFLGIYLICVAYSLQHSKEDRLAYLNHLPGGELMIQLFFVLYGVLALAFLSGYYVTLAAQILAVLLPPVMLLIDGNVAYWHNTRRVEFWNQMKLLGESVGIFGTAVILATDG.

8 helical membrane-spanning segments follow: residues 21–40 (VLLT…LYAE), 52–72 (VPYL…MSFG), 77–97 (WFAL…YIGG), 110–130 (YSRT…AGEL), 139–159 (SLQS…AYSL), 182–202 (LFFV…YVTL), 206–226 (ILAV…AYWH), and 233–253 (FWNQ…AVIL).

The protein localises to the membrane. Functionally, may activate NF-kappa-B signaling pathways. In Pongo abelii (Sumatran orangutan), this protein is Transmembrane protein 101 (TMEM101).